The primary structure comprises 511 residues: Cytochrome P450 4A7 (511 aa).

Residues 1–4 (MSVS) constitute a propeptide that is removed on maturation. Glutamate 322 and cysteine 458 together coordinate heme.

The protein belongs to the cytochrome P450 family. It depends on heme as a cofactor. In terms of tissue distribution, liver, kidney, small intestine.

It localises to the endoplasmic reticulum membrane. The protein localises to the microsome membrane. It carries out the reaction an omega-methyl-long-chain fatty acid + reduced [NADPH--hemoprotein reductase] + O2 = an omega-hydroxy-long-chain fatty acid + oxidized [NADPH--hemoprotein reductase] + H2O + H(+). Functionally, cytochromes P450 are a group of heme-thiolate monooxygenases. In liver microsomes, this enzyme is involved in an NADPH-dependent electron transport pathway. It oxidizes a variety of structurally unrelated compounds, including steroids, fatty acids, and xenobiotics. The kidney P-450 system is rather specialized for the omega-hydroxylation of fatty acids. Both P450-KA1 and P450-KA2 catalyze the omega- and (omega-1)-hydroxylation of various fatty acids with no drug-metabolizing activity, and hydroxylate prostaglandin A1 and A2 solely at the omega-position. The polypeptide is Cytochrome P450 4A7 (CYP4A7) (Oryctolagus cuniculus (Rabbit)).